We begin with the raw amino-acid sequence, 207 residues long: Putative 3-methyladenine DNA glycosylase (207 aa).

The protein belongs to the DNA glycosylase MPG family.

This chain is Putative 3-methyladenine DNA glycosylase, found in Burkholderia cenocepacia (strain HI2424).